The chain runs to 404 residues: Putative replication protein C (404 aa).

The segment at 249–287 is disordered; it reads PDQIERHKQNSHPESTNEFEPSSREEQGERPSPAIEPQR.

This sequence to A.rhizogenes possible replication protein C (RepC).

This is Putative replication protein C from Sinorhizobium fredii (strain NBRC 101917 / NGR234).